The primary structure comprises 302 residues: MLSALESILLSVATSEAMLGVLGNTFIVLVNYTDWVRNKKLSKINFILTGLAISRIFTIWIITLDAYTKVFLLTMLMPSSLHECMSYIWVIINHLSVWFSTSLGIFYFLKIANFSHYIFLWMKRRADKVFVFLIVFLIITWLASFPLAVKVIKDVKIYQSNTSWLIHLEKSELLINYVFANMGPISLFIVAIIACFLLTISLWRHSRQMQSIGSGFRDLNTEAHMKAMKVLIAFIILFILYFLGILIETLCLFLTNNKLLFIFGFTLSAMYPCCHSFILILTSRELKQATMRALQRLKCCET.

Topologically, residues 1–7 (MLSALES) are extracellular. The chain crosses the membrane as a helical span at residues 8-28 (ILLSVATSEAMLGVLGNTFIV). Over 29–43 (LVNYTDWVRNKKLSK) the chain is Cytoplasmic. A helical membrane pass occupies residues 44-64 (INFILTGLAISRIFTIWIITL). The Extracellular portion of the chain corresponds to 65-87 (DAYTKVFLLTMLMPSSLHECMSY). A helical membrane pass occupies residues 88 to 108 (IWVIINHLSVWFSTSLGIFYF). Over 109-128 (LKIANFSHYIFLWMKRRADK) the chain is Cytoplasmic. Residues 129–149 (VFVFLIVFLIITWLASFPLAV) form a helical membrane-spanning segment. The Extracellular portion of the chain corresponds to 150 to 182 (KVIKDVKIYQSNTSWLIHLEKSELLINYVFANM). Asn-161 carries an N-linked (GlcNAc...) asparagine glycan. The helical transmembrane segment at 183–203 (GPISLFIVAIIACFLLTISLW) threads the bilayer. The Cytoplasmic portion of the chain corresponds to 204-229 (RHSRQMQSIGSGFRDLNTEAHMKAMK). Residues 230–250 (VLIAFIILFILYFLGILIETL) traverse the membrane as a helical segment. The Extracellular segment spans residues 251 to 259 (CLFLTNNKL). A helical transmembrane segment spans residues 260–280 (LFIFGFTLSAMYPCCHSFILI). Over 281–302 (LTSRELKQATMRALQRLKCCET) the chain is Cytoplasmic.

It belongs to the G-protein coupled receptor T2R family.

It is found in the membrane. Functionally, putative taste receptor which may play a role in the perception of bitterness. This chain is Taste receptor type 2 member 104, found in Mus musculus (Mouse).